A 328-amino-acid polypeptide reads, in one-letter code: tRNA-modifying protein YgfZ (328 aa).

Residues tryptophan 28 and tryptophan 190 each contribute to the folate site.

The protein belongs to the tRNA-modifying YgfZ family.

It is found in the cytoplasm. Its function is as follows. Folate-binding protein involved in regulating the level of ATP-DnaA and in the modification of some tRNAs. It is probably a key factor in regulatory networks that act via tRNA modification, such as initiation of chromosomal replication. The sequence is that of tRNA-modifying protein YgfZ from Sodalis glossinidius (strain morsitans).